Reading from the N-terminus, the 536-residue chain is uncharacterized protein (536 aa).

Disordered stretches follow at residues 1–76 (MSFT…SPAS) and 204–237 (NWNSSSSFTSSTSSTPISSSYSSSGTLPSKSNKS). 2 stretches are compositionally biased toward low complexity: residues 7 to 76 (TSSV…SPAS) and 204 to 234 (NWNSSSSFTSSTSSTPISSSYSSSGTLPSKS). Residues 247–267 (CSVAIPVGVVLILIGLGIFLW) form a helical membrane-spanning segment. Disordered stretches follow at residues 287–354 (YGFN…LLGG) and 373–536 (DASD…LNLF). A compositionally biased stretch (polar residues) spans 290–326 (NPNQPSNFRSPNRAPSTNNRYRGWNGSPTPAAGNNTN). Low complexity predominate over residues 327–350 (GRPVAPRPSAGAGGANPPAASQPG). The chain crosses the membrane as a helical span at residues 351–371 (LLGGSSNSAGPIAAATAAGVG). The segment covering 403-424 (SASNEAEATMPPSNGSNFSEGL) has biased composition (polar residues). The span at 430-454 (ESGPAVGAAGAAAEAAEHSGSGSDS) shows a compositional bias: low complexity. The segment covering 480–509 (SYGSRAALSSRSQSNLLSPTSTGASNQPNY) has biased composition (polar residues). The segment covering 517-527 (SSSNVSIPRSS) has biased composition (low complexity).

The protein localises to the membrane. This is an uncharacterized protein from Schizosaccharomyces pombe (strain 972 / ATCC 24843) (Fission yeast).